An 83-amino-acid polypeptide reads, in one-letter code: Cytochrome b559 subunit alpha (83 aa).

Residues 21–35 (VIHSITIPSLFIAGW) form a helical membrane-spanning segment. Residue His-23 coordinates heme.

This sequence belongs to the PsbE/PsbF family. As to quaternary structure, heterodimer of an alpha subunit and a beta subunit. PSII is composed of 1 copy each of membrane proteins PsbA, PsbB, PsbC, PsbD, PsbE, PsbF, PsbH, PsbI, PsbJ, PsbK, PsbL, PsbM, PsbT, PsbX, PsbY, PsbZ, Psb30/Ycf12, at least 3 peripheral proteins of the oxygen-evolving complex and a large number of cofactors. It forms dimeric complexes. It depends on heme b as a cofactor.

The protein localises to the plastid. Its subcellular location is the chloroplast thylakoid membrane. Functionally, this b-type cytochrome is tightly associated with the reaction center of photosystem II (PSII). PSII is a light-driven water:plastoquinone oxidoreductase that uses light energy to abstract electrons from H(2)O, generating O(2) and a proton gradient subsequently used for ATP formation. It consists of a core antenna complex that captures photons, and an electron transfer chain that converts photonic excitation into a charge separation. The protein is Cytochrome b559 subunit alpha of Mesembryanthemum crystallinum (Common ice plant).